Consider the following 62-residue polypeptide: Photosystem II reaction center protein Z (62 aa).

2 helical membrane passes run 8 to 28 and 41 to 61; these read AVFALIITSSILLISVPVVFA and FSGTSLWIGLVFLVGILNSLI.

This sequence belongs to the PsbZ family. As to quaternary structure, PSII is composed of 1 copy each of membrane proteins PsbA, PsbB, PsbC, PsbD, PsbE, PsbF, PsbH, PsbI, PsbJ, PsbK, PsbL, PsbM, PsbT, PsbY, PsbZ, Psb30/Ycf12, at least 3 peripheral proteins of the oxygen-evolving complex and a large number of cofactors. It forms dimeric complexes.

It localises to the plastid. Its subcellular location is the chloroplast thylakoid membrane. Functionally, may control the interaction of photosystem II (PSII) cores with the light-harvesting antenna, regulates electron flow through the 2 photosystem reaction centers. PSII is a light-driven water plastoquinone oxidoreductase, using light energy to abstract electrons from H(2)O, generating a proton gradient subsequently used for ATP formation. This chain is Photosystem II reaction center protein Z, found in Arabidopsis thaliana (Mouse-ear cress).